The sequence spans 305 residues: Probable lipid kinase YegS-like (305 aa).

The 129-residue stretch at 1 to 129 folds into the DAGKc domain; that stretch reads MSERKALLIL…IDLGEVGGQI (129 aa). ATP contacts are provided by residues Thr-39, 65-71, and Thr-92; that span reads GDGTLRD. Mg(2+) contacts are provided by Leu-210, Asp-213, and Leu-215. Glu-268 (proton acceptor) is an active-site residue.

The protein belongs to the diacylglycerol/lipid kinase family. YegS lipid kinase subfamily. Mg(2+) serves as cofactor. Ca(2+) is required as a cofactor.

It is found in the cytoplasm. Functionally, probably phosphorylates lipids; the in vivo substrate is unknown. The sequence is that of Probable lipid kinase YegS-like from Pseudomonas fluorescens (strain Pf0-1).